A 59-amino-acid chain; its full sequence is Large ribosomal subunit protein uL30 (59 aa).

It belongs to the universal ribosomal protein uL30 family. As to quaternary structure, part of the 50S ribosomal subunit.

The protein is Large ribosomal subunit protein uL30 of Buchnera aphidicola subsp. Schizaphis graminum (strain Sg).